A 186-amino-acid polypeptide reads, in one-letter code: Peptide deformylase (186 aa).

Residues cysteine 113 and histidine 156 each coordinate Fe cation. The active site involves glutamate 157. Histidine 160 is a binding site for Fe cation.

This sequence belongs to the polypeptide deformylase family. Fe(2+) serves as cofactor.

The catalysed reaction is N-terminal N-formyl-L-methionyl-[peptide] + H2O = N-terminal L-methionyl-[peptide] + formate. Functionally, removes the formyl group from the N-terminal Met of newly synthesized proteins. Requires at least a dipeptide for an efficient rate of reaction. N-terminal L-methionine is a prerequisite for activity but the enzyme has broad specificity at other positions. In Limosilactobacillus reuteri (strain DSM 20016) (Lactobacillus reuteri), this protein is Peptide deformylase.